A 154-amino-acid chain; its full sequence is Small ribosomal subunit protein uS9 (154 aa).

Disordered stretches follow at residues 1–33 and 115–154; these read MVPP…SGLG and PENN…YSKR. A compositionally biased stretch (basic residues) spans 135 to 154; that stretch reads KERKKAGLKKARKAPQYSKR.

It belongs to the universal ribosomal protein uS9 family.

The chain is Small ribosomal subunit protein uS9 from Tropheryma whipplei (strain TW08/27) (Whipple's bacillus).